We begin with the raw amino-acid sequence, 20 residues long: Ranalexin-1Ca (20 aa).

Cys14 and Cys20 form a disulfide bridge.

Expressed by the skin glands.

Its subcellular location is the secreted. Functionally, antibacterial activity against Gram-positive bacterium S.aureus (MIC=17 uM) and Gram-negative bacterium E.coli (MIC=4 uM). Has activity against C.albicans (MIC=14 uM). The protein is Ranalexin-1Ca of Lithobates clamitans (Green frog).